The sequence spans 551 residues: Eukaryotic translation initiation factor 3 subunit D-2 (551 aa).

The segment at 105 to 152 is disordered; that stretch reads NNVRARGRTGRGSQAVGGPGGPAAGGSTANSTKYGKGRNTRNTQNVGR. The segment covering 119-128 has biased composition (gly residues); that stretch reads AVGGPGGPAA. An RNA gate region spans residues 290–304; the sequence is QFDLLTVNETSLEPP.

It belongs to the eIF-3 subunit D family. Component of the eukaryotic translation initiation factor 3 (eIF-3) complex. The eIF-3 complex interacts with pix.

The protein localises to the cytoplasm. In terms of biological role, mRNA cap-binding component of the eukaryotic translation initiation factor 3 (eIF-3) complex, which is involved in protein synthesis of a specialized repertoire of mRNAs and, together with other initiation factors, stimulates binding of mRNA and methionyl-tRNAi to the 40S ribosome. The eIF-3 complex specifically targets and initiates translation of a subset of mRNAs involved in cell proliferation. In the eIF-3 complex, eif3d specifically recognizes and binds the 7-methylguanosine cap of a subset of mRNAs. This Drosophila erecta (Fruit fly) protein is Eukaryotic translation initiation factor 3 subunit D-2.